Consider the following 607-residue polypeptide: Pescadillo homolog (607 aa).

The BRCT domain occupies 320-413 (KLKNLFKGLK…KLLPVNKYLI (94 aa)). The tract at residues 486-607 (EALNSGALEE…KTQRKEILAK (122 aa)) is disordered. A compositionally biased stretch (acidic residues) spans 495-511 (EAPEEEDDDEEAPEEDE). A compositionally biased stretch (basic and acidic residues) spans 530–549 (IFKENPSEQKKLTKQEEALR). Positions 551-562 (RMVKSRHKKLYR) are enriched in basic residues. The segment covering 563–607 (KMLEKQKKQTKEANLLKEKRQQIDKKQRVEQTQKRKTQRKEILAK) has biased composition (basic and acidic residues).

This sequence belongs to the pescadillo family.

The protein localises to the nucleus. It is found in the nucleolus. Its subcellular location is the nucleoplasm. Functionally, required for maturation of ribosomal RNAs and formation of the large ribosomal subunit. This chain is Pescadillo homolog, found in Culex quinquefasciatus (Southern house mosquito).